The primary structure comprises 225 residues: MNGIRDVVKEEQPRERLLLEGAGSLSNRELLAVLLRTGSKDETVLKLSDKILHHFDGLRMLKDATLEELVSIHGVGVAKASQLIAAFELGRRMVRLEYQNRYSIRSPEDCARYMMEEMRFLQQEHFVCLYLNTKNQVIHRQTIFIGSLNSSIVHPREVFKEAFRRAAASIICLHNHPSGDPAPSREDIEVTKRLVECGRIIGIEVLDHIIIGDHKFVSLKEKGHI.

One can recognise an MPN domain in the interval 103-225 (SIRSPEDCAR…FVSLKEKGHI (123 aa)). Zn(2+)-binding residues include His-174, His-176, and Asp-187. The JAMM motif signature appears at 174 to 187 (HNHPSGDPAPSRED).

The protein belongs to the UPF0758 family.

The protein is UPF0758 protein BCQ_4241 of Bacillus cereus (strain Q1).